The primary structure comprises 335 residues: DDRGK domain-containing protein 1 (335 aa).

Residues 1 to 6 (MGDTYS) are Lumenal-facing. Residues 7 to 27 (LVLVAGYLSIFLFIGAIGYFY) form a helical membrane-spanning segment. Over 28–335 (LSKPRIPSSN…NNDQDPVDTN (308 aa)) the chain is Cytoplasmic. The segment at 37 to 124 (NVNEQQQQQQ…GEDIGVVAPG (88 aa)) is disordered. 2 stretches are compositionally biased toward low complexity: residues 41–56 (QQQQ…QQPQ) and 91–103 (SSGS…TNSD). The span at 104 to 117 (NYDDDNGQEGEGED) shows a compositional bias: acidic residues.

It belongs to the DDRGK1 family.

The protein localises to the endoplasmic reticulum membrane. Functionally, substrate adapter for ufmylation, the covalent attachment of the ubiquitin-like modifier UFM1 to substrate proteins. This is DDRGK domain-containing protein 1 from Dictyostelium discoideum (Social amoeba).